Reading from the N-terminus, the 374-residue chain is MSVPAFIDISEEDQAAELRAYLKSKGAEISEENSEGGLHIDLAQIIEACDVCLKEDDKDVESVMNSVVSLLLILEPDKQEALIESLCEKLVKFREGERPSLRLQLLSNLFHGMDKNTPVRYTVYCSLIKVAASCGAIQYIPTELDQVRKWISDWNLTTEKKHTLLRLLYEALVDCKKSDAASKVMVELLGSYTEDNASQARVDAHRCIVRALKDPNAFLFDHLLTLKPVKFLEGELIHDLLTIFVSAKLASYVKFYQNNKDFIDSLGLLHEQNMAKMRLLTFMGMAVENKEISFDTMQQELQIGADDVEAFVIDAVRTKMVYCKIDQTQRKVVVSHSTHRTFGKQQWQQLYDTLNAWKQNLNKVKNSLLSLSDT.

Ser-2 carries the N-acetylserine modification. A phosphoserine mark is found at Ser-2 and Ser-152. In terms of domain architecture, PCI spans 180 to 339 (AASKVMVELL…RKVVVSHSTH (160 aa)). An N6-acetyllysine modification is found at Lys-254. Ser-367 carries the post-translational modification Phosphoserine.

It belongs to the eIF-3 subunit M family. As to quaternary structure, component of the eukaryotic translation initiation factor 3 (eIF-3) complex, which is composed of 13 subunits: EIF3A, EIF3B, EIF3C, EIF3D, EIF3E, EIF3F, EIF3G, EIF3H, EIF3I, EIF3J, EIF3K, EIF3L and EIF3M. The eIF-3 complex appears to include 3 stable modules: module A is composed of EIF3A, EIF3B, EIF3G and EIF3I; module B is composed of EIF3F, EIF3H, and EIF3M; and module C is composed of EIF3C, EIF3D, EIF3E, EIF3K and EIF3L. EIF3C of module C binds EIF3B of module A and EIF3H of module B, thereby linking the three modules. EIF3J is a labile subunit that binds to the eIF-3 complex via EIF3B. The eIF-3 complex interacts with RPS6KB1 under conditions of nutrient depletion. Mitogenic stimulation leads to binding and activation of a complex composed of MTOR and RPTOR, leading to phosphorylation and release of RPS6KB1 and binding of EIF4B to eIF-3.

The protein resides in the cytoplasm. Functionally, component of the eukaryotic translation initiation factor 3 (eIF-3) complex, which is required for several steps in the initiation of protein synthesis. The eIF-3 complex associates with the 40S ribosome and facilitates the recruitment of eIF-1, eIF-1A, eIF-2:GTP:methionyl-tRNAi and eIF-5 to form the 43S pre-initiation complex (43S PIC). The eIF-3 complex stimulates mRNA recruitment to the 43S PIC and scanning of the mRNA for AUG recognition. The eIF-3 complex is also required for disassembly and recycling of post-termination ribosomal complexes and subsequently prevents premature joining of the 40S and 60S ribosomal subunits prior to initiation. The eIF-3 complex specifically targets and initiates translation of a subset of mRNAs involved in cell proliferation, including cell cycling, differentiation and apoptosis, and uses different modes of RNA stem-loop binding to exert either translational activation or repression. The polypeptide is Eukaryotic translation initiation factor 3 subunit M (Pongo abelii (Sumatran orangutan)).